A 204-amino-acid chain; its full sequence is 8-oxoguanine DNA glycosylase/AP lyase (204 aa).

Residues Lys129 and Asp147 contribute to the active site.

The protein belongs to the type-2 OGG1 family.

The enzyme catalyses 2'-deoxyribonucleotide-(2'-deoxyribose 5'-phosphate)-2'-deoxyribonucleotide-DNA = a 3'-end 2'-deoxyribonucleotide-(2,3-dehydro-2,3-deoxyribose 5'-phosphate)-DNA + a 5'-end 5'-phospho-2'-deoxyribonucleoside-DNA + H(+). Catalyzes the excision of an oxidatively damaged form of guanine (7,8-dihydro-8-oxoguanine = 8-oxoG) from DNA. Also cleaves the DNA backbone at apurinic/apyrimidinic sites (AP sites). Prefers oligomers containing 8-oxoG:C, 8-oxoG:T and 8-oxoG:G base pairs, and is less effective on oligomers containing 8-oxoG:A mispairs. The sequence is that of 8-oxoguanine DNA glycosylase/AP lyase from Thermoplasma volcanium (strain ATCC 51530 / DSM 4299 / JCM 9571 / NBRC 15438 / GSS1).